We begin with the raw amino-acid sequence, 349 residues long: uncharacterized protein (349 aa).

The next 10 helical transmembrane spans lie at 15–35 (VHSP…NPVT), 53–73 (ISFC…MILI), 91–111 (WFLL…LMFS), 120–140 (NVVL…ILLL), 147–167 (LSMV…FWGV), 179–199 (FGLG…TTIL), 218–238 (LLGT…DHFM), 248–268 (WMLI…LAGL), 276–296 (INLA…LILL), and 302–322 (AQYL…IDNL). EamA domains follow at residues 39-164 (IELG…VTVF) and 191-319 (FISA…LSFI).

The protein belongs to the EamA transporter family.

The protein resides in the cell membrane. This is an uncharacterized protein from Synechocystis sp. (strain ATCC 27184 / PCC 6803 / Kazusa).